A 650-amino-acid chain; its full sequence is XK-related protein 4 (650 aa).

The span at 1-15 (MAAKSDGRLKMKKSS) shows a compositional bias: basic and acidic residues. The segment at 1–44 (MAAKSDGRLKMKKSSDVAFTPLQNSDHSGSVQGLAPGLPSGSGA) is disordered. The span at 21-31 (PLQNSDHSGSV) shows a compositional bias: polar residues. Transmembrane regions (helical) follow at residues 114–134 (WILA…WLAV) and 144–164 (WFGL…VFSF). Position 200 is a phosphoserine (Ser200). The interval 200–238 (SAAGEGEARPSTPQRQASNASKSNIAAANSGSNSSGATR) is disordered. A compositionally biased stretch (low complexity) spans 216-238 (ASNASKSNIAAANSGSNSSGATR). 8 helical membrane passes run 248 to 268 (CSFC…GQIW), 306 to 326 (HLLA…CIIV), 331 to 351 (LQAL…WALA), 365 to 385 (KPIS…TIAA), 396 to 418 (VFQL…WIVH), 428 to 448 (WEEI…WFNV), 457 to 477 (LFIY…LWYL), and 487 to 507 (FAIP…VFML).

Belongs to the XK family. As to quaternary structure, homodimer; homodimerization takes place upon caspase cleavage. Interacts with the processed C-terminus of XRCC4 (protein XRCC4, C-terminus); interaction promotes the phospholipid scramblase activity. Undergoes proteolytic processing by caspase-3 (CASP3), caspase-6 (CASP6) and caspase-7 (CASP7) to generate the XK-related protein 4, processed form, leading to its activation.

The protein localises to the cell membrane. The enzyme catalyses a 1,2-diacyl-sn-glycero-3-phospho-L-serine(in) = a 1,2-diacyl-sn-glycero-3-phospho-L-serine(out). With respect to regulation, phospholipid scramblase activity is activated upon caspase cleavage to generate the XK-related protein 4, processed form. Does not act prior the onset of apoptosis. Homodimerizes upon caspase cleavage. Phospholipid scramblase activity is activated following interaction with the processed C-terminus of XRCC4 (protein XRCC4, C-terminus). Its function is as follows. Phospholipid scramblase that promotes phosphatidylserine exposure on apoptotic cell surface. Phosphatidylserine is a specific marker only present at the surface of apoptotic cells and acts as a specific signal for engulfment. The sequence is that of XK-related protein 4 from Homo sapiens (Human).